A 747-amino-acid chain; its full sequence is H(+)/Cl(-) exchange transporter 4 (747 aa).

Residues 1-50 (MDFLDEPFPDVGTYEDFHTIDWLREKSRDTDRHRKITSKSKESIWEFIKS) form a required for localization in the endoplasmic reticulum region. Over 1-54 (MDFLDEPFPDVGTYEDFHTIDWLREKSRDTDRHRKITSKSKESIWEFIKSLLDA) the chain is Cytoplasmic. 2 consecutive transmembrane segments (helical) span residues 55 to 92 (WSGW…VCLS) and 138 to 161 (LNYL…VRVF). The Selectivity filter part_1 signature appears at 167 to 171 (GSGIP). S168 provides a ligand contact to chloride. The segment at residues 170–177 (IPEIKTIL) is an intramembrane region (helical). Helical transmembrane passes span 187–205 (GKWT…VSSG) and 211–230 (EGPL…SLFS). The Selectivity filter part_2 signature appears at 209-213 (GKEGP). 2 consecutive intramembrane regions (helical) follow at residues 242-254 (VLSA…VSVA) and 258-266 (PIGGVLFSL). Transmembrane regions (helical) follow at residues 278 to 296 (LWRS…RSIN), 320 to 345 (FPFI…AWCR), 352 to 372 (LGKY…IIAY), 429 to 449 (MWQL…TFGM), and 454 to 473 (GLFI…VGIG). Positions 454–458 (GLFIP) match the Selectivity filter part_3 motif. F456 is a chloride binding site. Intramembrane regions (helical) lie at residues 501-515 (GLYA…LGGV) and 519-530 (TVSLVVIMFELT). An intramembrane region (note=Loop between two helices) is located at residues 531-534 (GGLE). A helical membrane pass occupies residues 535–553 (YIVPLMAAAVTSKWVADAF). At 554–747 (GKEGIYEAHI…NQDPESIIFN (194 aa)) the chain is on the cytoplasmic side. Y559 provides a ligand contact to chloride. One can recognise a CBS 1 domain in the interval 587 to 653 (MRPRRGEPPL…AIKNARQRQE (67 aa)). Residues S597 and 618-620 (YNG) contribute to the ATP site. The interval 654–683 (GIVSNSIMYFTEEPPELPANSPHPLKLRRI) is required for localization in the endoplasmic reticulum. The CBS 2 domain maps to 684-742 (LNLSPFTVTDHTPMETVVDIFRKLGLRQCLVTRSGRLLGIITKKDVLRHMAQMANQDPE). 725-728 (TKKD) serves as a coordination point for ATP.

This sequence belongs to the chloride channel (TC 2.A.49) family. ClC-4/CLCN4 subfamily. Strongly expressed in liver and brain, but also in heart, muscle, kidney and spleen.

It is found in the early endosome membrane. The protein resides in the late endosome membrane. The protein localises to the endoplasmic reticulum membrane. It localises to the lysosome membrane. Its subcellular location is the recycling endosome membrane. Strongly outwardly rectifying, electrogenic H(+)/Cl(-)exchanger which mediates the exchange of chloride ions against protons. The CLC channel family contains both chloride channels and proton-coupled anion transporters that exchange chloride or another anion for protons. The presence of conserved gating glutamate residues is typical for family members that function as antiporters. This chain is H(+)/Cl(-) exchange transporter 4 (Clcn4), found in Rattus norvegicus (Rat).